A 492-amino-acid polypeptide reads, in one-letter code: Serine incorporator 4 (492 aa).

The next 10 membrane-spanning stretches (helical) occupy residues 58-78 (FYIL…SKTV), 113-133 (AVYR…VLLV), 148-168 (SFWS…FCIP), 179-199 (IGIC…TAFA), 217-237 (FLGV…GAVL), 254-274 (LLSL…APCI), 281-301 (SGLL…FSAL), 330-350 (IPDA…VLFA), 421-441 (GFHF…TNWF), and 464-484 (VASC…PLLA).

This sequence belongs to the TDE1 family.

It localises to the membrane. Functionally, incorporates a polar amino acid serine into membranes and facilitates the synthesis of two serine-derived lipids, phosphatidylserine and sphingolipids. This is Serine incorporator 4 (Serinc4) from Rattus norvegicus (Rat).